The sequence spans 112 residues: Nucleoid-associated protein FTN_1196 (112 aa).

The interval Met1–Glu27 is disordered. Basic and acidic residues predominate over residues Glu17 to Glu27.

It belongs to the YbaB/EbfC family. As to quaternary structure, homodimer.

The protein resides in the cytoplasm. It is found in the nucleoid. In terms of biological role, binds to DNA and alters its conformation. May be involved in regulation of gene expression, nucleoid organization and DNA protection. The protein is Nucleoid-associated protein FTN_1196 of Francisella tularensis subsp. novicida (strain U112).